Reading from the N-terminus, the 562-residue chain is Putative transport protein NT01EI_2530 (562 aa).

6 helical membrane-spanning segments follow: residues 8 to 28 (LLTGNYILLLFVVLALGLCLG), 32 to 52 (LGSIQLGNSIGVLVVSLLLGQ), 66 to 86 (FMLFIFCVGVEAGPNFFSIFF), 94 to 114 (MLALVMVASALCIALGLGKLF), 118 to 138 (IGLTAGMLAGSMTSTPVLVGA), and 158 to 178 (HLSLGYALTYLVGLVSLIFGA). 2 RCK C-terminal domains span residues 202-288 (LDND…SFRN) and 290-373 (KEVF…RIGF). 5 consecutive transmembrane segments (helical) span residues 383–403 (LLAFCAFFIIGLMIGLITFQF), 406–426 (FSFGIGNAAGLLFAGIMLGFL), 443–463 (MVKEFGLMVFMAGVGLSAGAG), 477–497 (IAGLIVSLVPVVICFLFGAFV), and 541–561 (IANVLLTLAGTLIIIVWPGVV).

This sequence belongs to the AAE transporter (TC 2.A.81) family. YbjL subfamily.

Its subcellular location is the cell membrane. This chain is Putative transport protein NT01EI_2530, found in Edwardsiella ictaluri (strain 93-146).